The primary structure comprises 188 residues: Putative manganese efflux pump MntP (188 aa).

6 helical membrane-spanning segments follow: residues 1–21, 40–60, 64–84, 105–127, 131–153, and 166–186; these read MLIQILLIGVSVSMDTFAVSI, LWFGGFQALFPLLGYFAASTF, VTAVDHWIIFGLLALIGGNMV, HMLPLAVACSIDAVAVGVSFAFM, IWLSVVIIGITTGLFSAAGLYIG, and IAGGVVLILIGLKVLFEHLGF.

It belongs to the MntP (TC 9.B.29) family.

It is found in the cell membrane. Its function is as follows. Probably functions as a manganese efflux pump. In Bifidobacterium adolescentis (strain ATCC 15703 / DSM 20083 / NCTC 11814 / E194a), this protein is Putative manganese efflux pump MntP.